The chain runs to 728 residues: Homoaconitase, mitochondrial (728 aa).

A mitochondrion-targeting transit peptide spans 1 to 24 (MVAIPRLARLSVPAWALSARGRFY). Positions 362, 422, and 425 each coordinate [4Fe-4S] cluster.

It belongs to the aconitase/IPM isomerase family. [4Fe-4S] cluster is required as a cofactor.

It is found in the mitochondrion. The catalysed reaction is (2R,3S)-homoisocitrate = cis-homoaconitate + H2O. The protein operates within amino-acid biosynthesis; L-lysine biosynthesis via AAA pathway; L-alpha-aminoadipate from 2-oxoglutarate: step 3/5. Catalyzes the reversible hydration of cis-homoaconitate to (2R,3S)-homoisocitrate, a step in the alpha-aminoadipate pathway for lysine biosynthesis. The chain is Homoaconitase, mitochondrial (LYS4) from Cryptococcus neoformans var. neoformans serotype D (strain JEC21 / ATCC MYA-565) (Filobasidiella neoformans).